The sequence spans 532 residues: MPELSLLSALDAARIQWYHFKAIIVAGMGLFTDAYDLFCIAPIMKMISQIYYHKDSIGTALLSTSYAIALLGTALGQLIFGYLGDRVGRRKVYGLSLLIMVFSSFGCGFSVCTTRRSCVMVSLGFFRFVLGLGIGGDYPLSATIMSEFANKRTRGAFIAAVFSMQGLGILMSSAVTMVVCLAFKNAGEGSSEKTNVAGLETLAPPESDIAWRLILMIGALPAALTFYWRMLMPETARYTALVENNVVQAAKDMQRVMSVSMISQITEDSSSELEQPPSSSSYKLFSRRFLSLHGRDLFAASANWFLVDVVFYTSNLLLSQIFNFSNKPLNSTNVYDSAFEVAKLAAIVAACSTIPGYWFTVYFIDKIGRVKIQMMGFFLMAVVYLVAGIPYSWYWSKHEKTNKGFMVLYGLIFFFSNFGPNTTTFIIPAELFPARFRSTCHGISGAAGKFGAIVGTVGFLWATRHHEEDGFPDVKRVRIAFLILGGVCIAGMIVTYLFTRETMGRSLEENEDEIVSTSAGSSPANELLRRQY.

Topologically, residues 1–22 (MPELSLLSALDAARIQWYHFKA) are cytoplasmic. The chain crosses the membrane as a helical span at residues 23 to 43 (IIVAGMGLFTDAYDLFCIAPI). At 44 to 62 (MKMISQIYYHKDSIGTALL) the chain is on the extracellular side. A helical membrane pass occupies residues 63–83 (STSYAIALLGTALGQLIFGYL). Over 84 to 91 (GDRVGRRK) the chain is Cytoplasmic. Residues 92–112 (VYGLSLLIMVFSSFGCGFSVC) form a helical membrane-spanning segment. Residues 113-124 (TTRRSCVMVSLG) lie on the Extracellular side of the membrane. Residues 125–145 (FFRFVLGLGIGGDYPLSATIM) form a helical membrane-spanning segment. The Cytoplasmic portion of the chain corresponds to 146–154 (SEFANKRTR). Residues 155–175 (GAFIAAVFSMQGLGILMSSAV) traverse the membrane as a helical segment. Over 176–207 (TMVVCLAFKNAGEGSSEKTNVAGLETLAPPES) the chain is Extracellular. Residues 208–228 (DIAWRLILMIGALPAALTFYW) form a helical membrane-spanning segment. At 229-292 (RMLMPETARY…KLFSRRFLSL (64 aa)) the chain is on the cytoplasmic side. The chain crosses the membrane as a helical span at residues 293-313 (HGRDLFAASANWFLVDVVFYT). At 314–343 (SNLLLSQIFNFSNKPLNSTNVYDSAFEVAK) the chain is on the extracellular side. Residues 344 to 364 (LAAIVAACSTIPGYWFTVYFI) traverse the membrane as a helical segment. Residues 365 to 371 (DKIGRVK) lie on the Cytoplasmic side of the membrane. The helical transmembrane segment at 372–392 (IQMMGFFLMAVVYLVAGIPYS) threads the bilayer. Topologically, residues 393-406 (WYWSKHEKTNKGFM) are extracellular. A helical transmembrane segment spans residues 407-427 (VLYGLIFFFSNFGPNTTTFII). At 428-441 (PAELFPARFRSTCH) the chain is on the cytoplasmic side. A helical transmembrane segment spans residues 442 to 462 (GISGAAGKFGAIVGTVGFLWA). Over 463–478 (TRHHEEDGFPDVKRVR) the chain is Extracellular. Residues 479–499 (IAFLILGGVCIAGMIVTYLFT) form a helical membrane-spanning segment. Over 500–532 (RETMGRSLEENEDEIVSTSAGSSPANELLRRQY) the chain is Cytoplasmic. The tract at residues 509-532 (ENEDEIVSTSAGSSPANELLRRQY) is disordered. Residues 515–524 (VSTSAGSSPA) are compositionally biased toward polar residues.

It belongs to the major facilitator superfamily. Phosphate:H(+) symporter (TC 2.A.1.9) family.

It localises to the membrane. In terms of biological role, high-affinity transporter for external inorganic phosphate. The polypeptide is Probable inorganic phosphate transporter 1-9 (PHT1-9) (Arabidopsis thaliana (Mouse-ear cress)).